We begin with the raw amino-acid sequence, 196 residues long: Putative adenylate kinase (196 aa).

ATP is bound by residues G10, G12, K13, T14, and S15. The tract at residues 30-53 (YLNDLIKEEHLYSEVDEERDSVIA) is NMP. The LID stretch occupies residues 118–128 (KRGYSEEKINE). R119 is a binding site for ATP.

This sequence belongs to the adenylate kinase family. AK6 subfamily. Interacts with uS11. Not a structural component of 40S pre-ribosomes, but transiently interacts with them by binding to uS11.

It carries out the reaction AMP + ATP = 2 ADP. The catalysed reaction is ATP + H2O = ADP + phosphate + H(+). Its function is as follows. Broad-specificity nucleoside monophosphate (NMP) kinase that catalyzes the reversible transfer of the terminal phosphate group between nucleoside triphosphates and monophosphates. Also has ATPase activity. Involved in the late maturation steps of the 30S ribosomal particles, specifically 16S rRNA maturation. While NMP activity is not required for ribosome maturation, ATPase activity is. Associates transiently with small ribosomal subunit protein uS11. ATP hydrolysis breaks the interaction with uS11. May temporarily remove uS11 from the ribosome to enable a conformational change of the ribosomal RNA that is needed for the final maturation step of the small ribosomal subunit. In Methanosarcina mazei (strain ATCC BAA-159 / DSM 3647 / Goe1 / Go1 / JCM 11833 / OCM 88) (Methanosarcina frisia), this protein is Putative adenylate kinase.